We begin with the raw amino-acid sequence, 358 residues long: DnaJ homolog subfamily C member 18 (358 aa).

The 65-residue stretch at 82 to 146 folds into the J domain; sequence NYYEILGVSR…DKRLRYDEYG (65 aa). A helical membrane pass occupies residues 228–248; the sequence is AFIQLLPVLVIVIISVITQLL.

The protein resides in the endoplasmic reticulum membrane. In Macaca fascicularis (Crab-eating macaque), this protein is DnaJ homolog subfamily C member 18 (DNAJC18).